We begin with the raw amino-acid sequence, 452 residues long: Kremen protein 1 (452 aa).

The first 22 residues, 1 to 22 (MVMDIWTISLRILLFPSALVLC), serve as a signal peptide directing secretion. The Extracellular portion of the chain corresponds to 23-369 (SDSFHSECYT…TTSPSRPSGH (347 aa)). Residues 29 to 112 (ECYTVNGADY…YWKYCDIPAC (84 aa)) form the Kringle domain. 8 cysteine pairs are disulfide-bonded: Cys-30-Cys-112, Cys-53-Cys-93, Cys-82-Cys-107, Cys-120-Cys-184, Cys-145-Cys-165, Cys-149-Cys-167, Cys-188-Cys-196, and Cys-212-Cys-238. Asn-43 and Asn-57 each carry an N-linked (GlcNAc...) asparagine glycan. The region spanning 114-208 (MPGNLGCFRD…DGRIILFDSL (95 aa)) is the WSC domain. The region spanning 212–319 (CGGNYSTDSA…QGFSVVYEAF (108 aa)) is the CUB domain. N-linked (GlcNAc...) asparagine glycans are attached at residues Asn-215, Asn-253, Asn-291, Asn-328, and Asn-344. A helical transmembrane segment spans residues 370–390 (VPGWTIYALTGLLILTIIAIS). Over 391 to 452 (AKALLHISMK…HDDRNPLVGE (62 aa)) the chain is Cytoplasmic.

Interacts with lrp6.

The protein resides in the cell membrane. Receptor for Dickkopf proteins. Cooperates with DKK1/2 proteins to inhibit Wnt/beta-catenin signaling by promoting the endocytosis of Wnt receptors LRP5 and LRP6. In the absence of DKK1, potentiates Wnt-beta-catenin signaling by maintaining LRP5 or LRP6 at the cell membrane. The polypeptide is Kremen protein 1 (kremen1) (Xenopus laevis (African clawed frog)).